The following is a 289-amino-acid chain: Rhodopsin (289 aa).

Over 1-7 (YLVSPAG) the chain is Extracellular. Residues 8–32 (YAALGAYMFLLILVGFPVNFLTLYV) form a helical membrane-spanning segment. Over 33-44 (TLEHKKLRTPLN) the chain is Cytoplasmic. Residues 45–67 (YILLNLAVADLFMVLGGFTTTMY) traverse the membrane as a helical segment. Over 68–81 (TSMHGYFVLGRLGC) the chain is Extracellular. Residues cysteine 81 and cysteine 158 are joined by a disulfide bond. Residues 82-104 (NLEGFFVTLGGEIALWSLVVLAI) form a helical membrane-spanning segment. Residues 105–107 (ERW) carry the 'Ionic lock' involved in activated form stabilization motif. Over 105 to 123 (ERWIGVFKSIRNFRFTEDH) the chain is Cytoplasmic. The helical transmembrane segment at 124 to 144 (AIMGLGFSWVMAATCAVPPLV) threads the bilayer. At 145 to 173 (GWLRYIPEGMQCSCGVDYYTRAEGFNNES) the chain is on the extracellular side. An N-linked (GlcNAc...) asparagine glycan is attached at asparagine 171. Residues 174–195 (FVIYMFIVHFLIPLIVIFFCYG) form a helical membrane-spanning segment. The Cytoplasmic segment spans residues 196-223 (RLLCAVKEAAAAQQESETTQRAEKEVSR). Residues 224 to 245 (MVVIMVIGYLVCWLPYASVAWW) form a helical membrane-spanning segment. The Extracellular segment spans residues 246 to 257 (IFCNQGSEFGPI). A helical transmembrane segment spans residues 258-279 (FMTLPAFFAKSPAIYNPLIYIC). Residue lysine 267 is modified to N6-(retinylidene)lysine. The Cytoplasmic segment spans residues 280 to 289 (MNKQFPHCMI).

The protein belongs to the G-protein coupled receptor 1 family. Opsin subfamily. Post-translationally, phosphorylated on some or all of the serine and threonine residues present in the C-terminal region. In terms of processing, contains one covalently linked retinal chromophore.

It localises to the membrane. Its subcellular location is the cell projection. The protein resides in the cilium. The protein localises to the photoreceptor outer segment. Its function is as follows. Photoreceptor required for image-forming vision at low light intensity. While most salt water fish species use retinal as chromophore, most freshwater fish use 3-dehydroretinal, or a mixture of retinal and 3-dehydroretinal. Light-induced isomerization of 11-cis to all-trans retinal triggers a conformational change that activates signaling via G-proteins. Subsequent receptor phosphorylation mediates displacement of the bound G-protein alpha subunit by arrestin and terminates signaling. The sequence is that of Rhodopsin (rho) from Leocottus kesslerii (Kessler's sculpin).